The following is a 339-amino-acid chain: Ketol-acid reductoisomerase (NADP(+)) (339 aa).

Positions 1-182 constitute a KARI N-terminal Rossmann domain; sequence MRVYYDRDAD…GGGRAGIIET (182 aa). NADP(+) is bound by residues 24 to 27, arginine 48, serine 51, threonine 53, and 83 to 86; these read YGSQ and DELQ. The active site involves histidine 108. Residue glycine 134 participates in NADP(+) binding. A KARI C-terminal knotted domain is found at 183–328; sequence TFKEECETDL…AKLRGMMPWI (146 aa). Aspartate 191, glutamate 195, glutamate 227, and glutamate 231 together coordinate Mg(2+). A substrate-binding site is contributed by serine 252.

This sequence belongs to the ketol-acid reductoisomerase family. It depends on Mg(2+) as a cofactor.

The enzyme catalyses (2R)-2,3-dihydroxy-3-methylbutanoate + NADP(+) = (2S)-2-acetolactate + NADPH + H(+). The catalysed reaction is (2R,3R)-2,3-dihydroxy-3-methylpentanoate + NADP(+) = (S)-2-ethyl-2-hydroxy-3-oxobutanoate + NADPH + H(+). The protein operates within amino-acid biosynthesis; L-isoleucine biosynthesis; L-isoleucine from 2-oxobutanoate: step 2/4. It functions in the pathway amino-acid biosynthesis; L-valine biosynthesis; L-valine from pyruvate: step 2/4. In terms of biological role, involved in the biosynthesis of branched-chain amino acids (BCAA). Catalyzes an alkyl-migration followed by a ketol-acid reduction of (S)-2-acetolactate (S2AL) to yield (R)-2,3-dihydroxy-isovalerate. In the isomerase reaction, S2AL is rearranged via a Mg-dependent methyl migration to produce 3-hydroxy-3-methyl-2-ketobutyrate (HMKB). In the reductase reaction, this 2-ketoacid undergoes a metal-dependent reduction by NADPH to yield (R)-2,3-dihydroxy-isovalerate. The sequence is that of Ketol-acid reductoisomerase (NADP(+)) from Methylorubrum extorquens (strain CM4 / NCIMB 13688) (Methylobacterium extorquens).